Here is a 367-residue protein sequence, read N- to C-terminus: Ribosomal RNA large subunit methyltransferase M (367 aa).

S-adenosyl-L-methionine contacts are provided by residues serine 189, 222–225, aspartate 241, aspartate 261, and aspartate 278; that span reads CPGG. Lysine 307 serves as the catalytic Proton acceptor.

The protein belongs to the class I-like SAM-binding methyltransferase superfamily. RNA methyltransferase RlmE family. RlmM subfamily. Monomer.

The protein resides in the cytoplasm. The enzyme catalyses cytidine(2498) in 23S rRNA + S-adenosyl-L-methionine = 2'-O-methylcytidine(2498) in 23S rRNA + S-adenosyl-L-homocysteine + H(+). Catalyzes the 2'-O-methylation at nucleotide C2498 in 23S rRNA. In Shewanella denitrificans (strain OS217 / ATCC BAA-1090 / DSM 15013), this protein is Ribosomal RNA large subunit methyltransferase M.